We begin with the raw amino-acid sequence, 326 residues long: Hairy/enhancer-of-split related with YRPW motif-like protein (326 aa).

Residues Met1–Arg56 form a disordered region. The transcriptional repression and interaction with NCOR1 and SIN3A stretch occupies residues Gln42 to Ala111. A bHLH domain is found at Ala43–Leu98. Positions Phe116–Leu153 constitute an Orange domain. 2 disordered regions span residues His223–Thr260 and Pro272–Arg306. The segment covering Ser292–Gly305 has biased composition (low complexity).

It belongs to the HEY family. In terms of assembly, interacts with HES1, HDAC1, NCOR1 and SIN3A. Self-associates. Interacts with GATA4, GATA6, HEY1 and HEY2. As to expression, expressed in heart and at lower levels in brain, lung, muscle, ovary and testis.

The protein resides in the nucleus. Its function is as follows. Transcriptional repressor which binds preferentially to the canonical E box sequence 5'-CACGTG-3'. Downstream effector of Notch signaling required for cardiovascular development. Specifically required for the Notch-induced endocardial epithelial to mesenchymal transition, which is itself criticial for cardiac valve and septum development. Represses transcription by the cardiac transcriptional activators GATA4 and GATA6. This chain is Hairy/enhancer-of-split related with YRPW motif-like protein (Heyl), found in Mus musculus (Mouse).